The following is a 218-amino-acid chain: Octanoyltransferase (218 aa).

The 176-residue stretch at 31-206 folds into the BPL/LPL catalytic domain; the sequence is REAADEVWLV…QLVKHLDYAE (176 aa). Substrate-binding positions include 70 to 77, 137 to 139, and 150 to 152; these read RGGQVTYH, SLG, and GLA. Cys168 acts as the Acyl-thioester intermediate in catalysis.

The protein belongs to the LipB family.

It localises to the cytoplasm. The catalysed reaction is octanoyl-[ACP] + L-lysyl-[protein] = N(6)-octanoyl-L-lysyl-[protein] + holo-[ACP] + H(+). It functions in the pathway protein modification; protein lipoylation via endogenous pathway; protein N(6)-(lipoyl)lysine from octanoyl-[acyl-carrier-protein]: step 1/2. Functionally, catalyzes the transfer of endogenously produced octanoic acid from octanoyl-acyl-carrier-protein onto the lipoyl domains of lipoate-dependent enzymes. Lipoyl-ACP can also act as a substrate although octanoyl-ACP is likely to be the physiological substrate. The chain is Octanoyltransferase from Pseudomonas savastanoi pv. phaseolicola (strain 1448A / Race 6) (Pseudomonas syringae pv. phaseolicola (strain 1448A / Race 6)).